A 301-amino-acid chain; its full sequence is Homoserine kinase (301 aa).

K89–A99 contributes to the ATP binding site.

The protein belongs to the GHMP kinase family. Homoserine kinase subfamily.

It localises to the cytoplasm. The catalysed reaction is L-homoserine + ATP = O-phospho-L-homoserine + ADP + H(+). It participates in amino-acid biosynthesis; L-threonine biosynthesis; L-threonine from L-aspartate: step 4/5. Its function is as follows. Catalyzes the ATP-dependent phosphorylation of L-homoserine to L-homoserine phosphate. In Methanococcus maripaludis (strain C5 / ATCC BAA-1333), this protein is Homoserine kinase.